Here is a 140-residue protein sequence, read N- to C-terminus: uncharacterized protein (140 aa).

This sequence to B.subtilis YrhD.

This is an uncharacterized protein from Archaeoglobus fulgidus (strain ATCC 49558 / DSM 4304 / JCM 9628 / NBRC 100126 / VC-16).